The primary structure comprises 297 residues: 33 kDa chaperonin (297 aa).

Disulfide bonds link C232–C234 and C266–C269.

The protein belongs to the HSP33 family. Under oxidizing conditions two disulfide bonds are formed involving the reactive cysteines. Under reducing conditions zinc is bound to the reactive cysteines and the protein is inactive.

It localises to the cytoplasm. Redox regulated molecular chaperone. Protects both thermally unfolding and oxidatively damaged proteins from irreversible aggregation. Plays an important role in the bacterial defense system toward oxidative stress. The chain is 33 kDa chaperonin from Pseudomonas paraeruginosa (strain DSM 24068 / PA7) (Pseudomonas aeruginosa (strain PA7)).